A 969-amino-acid polypeptide reads, in one-letter code: Bifunctional glutamine synthetase adenylyltransferase/adenylyl-removing enzyme (969 aa).

The adenylyl removase stretch occupies residues 1-456 (MNWQANIHKL…HFEQLFAAPH (456 aa)). Residues 466–969 (EKRLAEVWLG…SALLEDESAK (504 aa)) are adenylyl transferase.

Belongs to the GlnE family. Mg(2+) is required as a cofactor.

It catalyses the reaction [glutamine synthetase]-O(4)-(5'-adenylyl)-L-tyrosine + phosphate = [glutamine synthetase]-L-tyrosine + ADP. It carries out the reaction [glutamine synthetase]-L-tyrosine + ATP = [glutamine synthetase]-O(4)-(5'-adenylyl)-L-tyrosine + diphosphate. Its function is as follows. Involved in the regulation of glutamine synthetase GlnA, a key enzyme in the process to assimilate ammonia. When cellular nitrogen levels are high, the C-terminal adenylyl transferase (AT) inactivates GlnA by covalent transfer of an adenylyl group from ATP to specific tyrosine residue of GlnA, thus reducing its activity. Conversely, when nitrogen levels are low, the N-terminal adenylyl removase (AR) activates GlnA by removing the adenylyl group by phosphorolysis, increasing its activity. The regulatory region of GlnE binds the signal transduction protein PII (GlnB) which indicates the nitrogen status of the cell. This chain is Bifunctional glutamine synthetase adenylyltransferase/adenylyl-removing enzyme, found in Nitrosococcus oceani (strain ATCC 19707 / BCRC 17464 / JCM 30415 / NCIMB 11848 / C-107).